Here is a 159-residue protein sequence, read N- to C-terminus: SsrA-binding protein (159 aa).

The segment at 131 to 159 is disordered; sequence KGKKLHDKRESEKERDWNRQKSRLLKDNG. Basic and acidic residues predominate over residues 137 to 159; it reads DKRESEKERDWNRQKSRLLKDNG.

The protein belongs to the SmpB family.

Its subcellular location is the cytoplasm. In terms of biological role, required for rescue of stalled ribosomes mediated by trans-translation. Binds to transfer-messenger RNA (tmRNA), required for stable association of tmRNA with ribosomes. tmRNA and SmpB together mimic tRNA shape, replacing the anticodon stem-loop with SmpB. tmRNA is encoded by the ssrA gene; the 2 termini fold to resemble tRNA(Ala) and it encodes a 'tag peptide', a short internal open reading frame. During trans-translation Ala-aminoacylated tmRNA acts like a tRNA, entering the A-site of stalled ribosomes, displacing the stalled mRNA. The ribosome then switches to translate the ORF on the tmRNA; the nascent peptide is terminated with the 'tag peptide' encoded by the tmRNA and targeted for degradation. The ribosome is freed to recommence translation, which seems to be the essential function of trans-translation. This Rhizobium etli (strain CIAT 652) protein is SsrA-binding protein.